Consider the following 211-residue polypeptide: Uracil phosphoribosyltransferase (211 aa).

5-phospho-alpha-D-ribose 1-diphosphate contacts are provided by residues Arg-78, Arg-103, and 130 to 138 (DPMLATGGT). Uracil contacts are provided by residues Ile-195 and 200-202 (GDA). Asp-201 is a binding site for 5-phospho-alpha-D-ribose 1-diphosphate.

Belongs to the UPRTase family. It depends on Mg(2+) as a cofactor.

The catalysed reaction is UMP + diphosphate = 5-phospho-alpha-D-ribose 1-diphosphate + uracil. The protein operates within pyrimidine metabolism; UMP biosynthesis via salvage pathway; UMP from uracil: step 1/1. With respect to regulation, allosterically activated by GTP. In terms of biological role, catalyzes the conversion of uracil and 5-phospho-alpha-D-ribose 1-diphosphate (PRPP) to UMP and diphosphate. The chain is Uracil phosphoribosyltransferase from Kocuria rhizophila (strain ATCC 9341 / DSM 348 / NBRC 103217 / DC2201).